Reading from the N-terminus, the 958-residue chain is SLIT and NTRK-like protein 5 (958 aa).

The first 40 residues, 1 to 40, serve as a signal peptide directing secretion; sequence MHTCCPPVTLEQDLHRKMHSWMLQTLAFAVTSLVLSCAET. Residues 41-664 lie on the Extracellular side of the membrane; that stretch reads IDYYGEICDN…GGGASSVPLS (624 aa). 6 LRR repeats span residues 82-103, 106-127, 130-151, 154-175, 178-199, and 201-222; these read PIYH…EFVN, GASI…AFHG, GLRR…TFLG, NLEY…AFGK, LLQV…LFRF, and PLTH…GLLQ. Asparagine 103 carries N-linked (GlcNAc...) asparagine glycosylation. The LRRCT 1 domain maps to 235 to 286; sequence NPWNCSCELISLKDWLDSISYSALVGDVVCETPFRLHGRDLDEVSKQELCPR. The interval 317 to 358 is disordered; it reads ATSSSAVYKPPLKPPKGTRQPNKPRVRPTSRQPSKDLGYSNY. The 43-residue stretch at 365–407 folds into the LRRNT domain; sequence QTKSPVPLECPTACSCNLQISDLGLNVNCQERKIESIAELQPK. LRR repeat units follow at residues 410–431, 434–455, 458–479, 482–503, 506–527, and 529–550; these read NPKK…DFLE, GLDL…AFGD, NLRR…LFYG, SLQY…TFDP, NLQL…VFSG, and TLLR…GVLD. Residues 563–614 form the LRRCT 2 domain; that stretch reads NPWDCTCDIVGMKLWVEQLKVGVLVDEVICKAPKKFAETDMRSIKSELLCPD. Asparagine 644 carries an N-linked (GlcNAc...) asparagine glycan. The helical transmembrane segment at 665–685 threads the bilayer; the sequence is VLILSLLLVFIMSVFVAAGLF. Residues 686–958 are Cytoplasmic-facing; sequence VLVMKRRKKN…LEKQTTFSQF (273 aa). The interval 789 to 844 is disordered; the sequence is NHHLQQQQQPPPPPQQPQQQPPPQLQLQPGEEERRESHHLRSPAYSVSTIEPREDL. Over residues 797–812 the composition is skewed to pro residues; the sequence is QPPPPPQQPQQQPPPQ.

The protein belongs to the SLITRK family. In terms of tissue distribution, expressed predominantly in the cerebral cortex of the brain but also at low levels in the spinal cord and medulla.

Its subcellular location is the membrane. Its function is as follows. Suppresses neurite outgrowth. The sequence is that of SLIT and NTRK-like protein 5 (SLITRK5) from Homo sapiens (Human).